The primary structure comprises 111 residues: Large ribosomal subunit protein P2 (111 aa).

A disordered region spans residues 62–111; the sequence is LASVPSGGAGGAAAAGGAAAAGGAAEAAPEEAKEEEKEESDDDMGFGLFD. Residues 76–88 show a composition bias toward low complexity; the sequence is AGGAAAAGGAAEA. S101 carries the post-translational modification Phosphoserine.

It belongs to the eukaryotic ribosomal protein P1/P2 family. In terms of assembly, P1 and P2 exist as dimers at the large ribosomal subunit.

Functionally, plays an important role in the elongation step of protein synthesis. The polypeptide is Large ribosomal subunit protein P2 (Podospora anserina (Pleurage anserina)).